A 194-amino-acid chain; its full sequence is MADKIKDAKIVFVVGGPGSGKGTQCEKIVEKYGYTHLSSGDLLRAEVASGSERGKQLQAIMQKGELVPLDTVLDMIKDAMIAKADVSKGYLIDGYPREVKQGEEFEKKIGAPALLLYIDAKAETMVQRLMKRGQTSGRSDDNEETIKKRLDLYYKATEPVIAYYETRGIVRKINSELPVDEVFAIVVKAIDELK.

A2 carries the post-translational modification N-acetylalanine. ATP is bound at residue G18 to T23. The tract at residues S38–V67 is NMP. Residues S39, R44, E65–V67, G94–R97, and Q101 each bind AMP. Residues K131–D141 form an LID region. R132 is a binding site for ATP. Positions 138 and 149 each coordinate AMP. Residue L177 coordinates ATP.

This sequence belongs to the adenylate kinase family. AK1 subfamily. Monomer. Mg(2+) is required as a cofactor.

Its subcellular location is the cytoplasm. The catalysed reaction is a ribonucleoside 5'-phosphate + ATP = a ribonucleoside 5'-diphosphate + ADP. The enzyme catalyses AMP + ATP = 2 ADP. It carries out the reaction dAMP + ATP = dADP + ADP. It catalyses the reaction dATP + AMP = dADP + ADP. The catalysed reaction is dAMP + dATP = 2 dADP. The enzyme catalyses a 2'-deoxyribonucleoside 5'-diphosphate + ATP = a 2'-deoxyribonucleoside 5'-triphosphate + ADP. It carries out the reaction a ribonucleoside 5'-diphosphate + ATP = a ribonucleoside 5'-triphosphate + ADP. It catalyses the reaction CDP + GTP = CTP + GDP. The catalysed reaction is GDP + ATP = GTP + ADP. The enzyme catalyses UDP + ATP = UTP + ADP. It carries out the reaction GTP + UDP = UTP + GDP. It catalyses the reaction dTDP + GTP = dTTP + GDP. The catalysed reaction is dCDP + GTP = dCTP + GDP. The enzyme catalyses dGDP + ATP = dGTP + ADP. It carries out the reaction dADP + GTP = dATP + GDP. It catalyses the reaction thiamine diphosphate + ADP = thiamine triphosphate + AMP. Its function is as follows. Catalyzes the reversible transfer of the terminal phosphate group between ATP and AMP. Also displays broad nucleoside diphosphate kinase activity. Plays an important role in cellular energy homeostasis and in adenine nucleotide metabolism. Also catalyzes at a very low rate the synthesis of thiamine triphosphate (ThTP) from thiamine diphosphate (ThDP) and ADP. The protein is Adenylate kinase isoenzyme 1 (ak1) of Cyprinus carpio (Common carp).